A 912-amino-acid polypeptide reads, in one-letter code: Serine/threonine-protein kinase D1 (912 aa).

Residue tyrosine 95 is modified to Phosphotyrosine. A Phorbol-ester/DAG-type 1 zinc finger spans residues 146 to 196; the sequence is PHALFVHSYRAPAFCDHCGEMLWGLVRQGLKCEGCGLNYHKRCAFKIPNNC. 4 positions are modified to phosphoserine: serine 205, serine 208, serine 219, and serine 223. Residues 270–320 form a Phorbol-ester/DAG-type 2 zinc finger; the sequence is PHTFVIHSYTRPTVCQYCKKLLKGLFRQGLQCKDCRFNCHKRCAPKVPNNC. Serine 345 carries the phosphoserine modification. A disordered region spans residues 377 to 402; that stretch reads NDSGEMQDPDPDHEDANRTISPSTSN. Phosphoserine; by MAPK13 is present on residues serine 397 and serine 401. In terms of domain architecture, PH spans 422-541; it reads TVMKEGWMVH…WEIAIQHALM (120 aa). Tyrosine 432 carries the post-translational modification Phosphotyrosine. Phosphoserine is present on serine 448. Tyrosine 463 is modified (phosphotyrosine; by ABL). At serine 473 the chain carries Phosphoserine. Tyrosine 502 carries the phosphotyrosine modification. Position 548 is a phosphoserine (serine 548). Residues 583–839 form the Protein kinase domain; sequence IFPDEVLGSG…VDKTLSHPWL (257 aa). Residues 589–597 and lysine 612 each bind ATP; that span reads LGSGQFGIV. Residue aspartate 706 is the Proton acceptor of the active site. Phosphoserine; by PKC/PRKCD is present on serine 738. Serine 742 carries the phosphoserine; by autocatalysis and PKC/PRKCD modification. Tyrosine 749 carries the phosphotyrosine modification. The residue at position 910 (serine 910) is a Phosphoserine; by autocatalysis.

The protein belongs to the protein kinase superfamily. CAMK Ser/Thr protein kinase family. PKD subfamily. Interacts (via N-terminus) with ADAP1/CENTA1. Interacts with MAPK13. Interacts with DAPK1 in an oxidative stress-regulated manner. Interacts with USP28; the interaction induces phosphorylation of USP28 and activated KRAS-mediated stabilization of ZNF304. Interacts with AKAP13 (via C-terminal domain). Requires Mg(2+) as cofactor. Phosphorylated at Ser-397 and Ser-401 by MAPK13 during regulation of insulin secretion in pancreatic beta cells. Phosphorylated by DAPK1. Phosphorylated at Tyr-95 and by ABL at Tyr-463, which primes the kinase in response to oxidative stress, and promotes a second step activating phosphorylation at Ser-738/Ser-742 by PKRD. Phosphorylated on Ser-910 upon S.enterica infection in macrophages.

Its subcellular location is the cytoplasm. It is found in the cell membrane. The protein localises to the golgi apparatus. It localises to the trans-Golgi network. It carries out the reaction L-seryl-[protein] + ATP = O-phospho-L-seryl-[protein] + ADP + H(+). It catalyses the reaction L-threonyl-[protein] + ATP = O-phospho-L-threonyl-[protein] + ADP + H(+). Its activity is regulated as follows. Activated by DAG and phorbol esters. Phorbol-ester/DAG-type domain 1 binds DAG with high affinity and appears to play the dominant role in mediating translocation to the cell membrane and trans-Golgi network. Phorbol-ester/DAG-type domain 2 binds phorbol ester with higher affinity. Autophosphorylation of Ser-742 and phosphorylation of Ser-738 by PKC relieves auto-inhibition by the PH domain. Phosphorylation on Tyr-463 by the SRC-ABL1 pathway in response to oxidative stress, is also required for activation. Activated by DAPK1 under oxidative stress. Functionally, serine/threonine-protein kinase that converts transient diacylglycerol (DAG) signals into prolonged physiological effects downstream of PKC, and is involved in the regulation of MAPK8/JNK1 and Ras signaling, Golgi membrane integrity and trafficking, cell survival through NF-kappa-B activation, cell migration, cell differentiation by mediating HDAC7 nuclear export, cell proliferation via MAPK1/3 (ERK1/2) signaling, and plays a role in cardiac hypertrophy, VEGFA-induced angiogenesis, genotoxic-induced apoptosis and flagellin-stimulated inflammatory response. Phosphorylates the epidermal growth factor receptor (EGFR) on dual threonine residues, which leads to the suppression of epidermal growth factor (EGF)-induced MAPK8/JNK1 activation and subsequent JUN phosphorylation. Phosphorylates RIN1, inducing RIN1 binding to 14-3-3 proteins YWHAB, YWHAE and YWHAZ and increased competition with RAF1 for binding to GTP-bound form of Ras proteins (NRAS, HRAS and KRAS). Acts downstream of the heterotrimeric G-protein beta/gamma-subunit complex to maintain the structural integrity of the Golgi membranes, and is required for protein transport along the secretory pathway. In the trans-Golgi network (TGN), regulates the fission of transport vesicles that are on their way to the plasma membrane. May act by activating the lipid kinase phosphatidylinositol 4-kinase beta (PI4KB) at the TGN for the local synthesis of phosphorylated inositol lipids, which induces a sequential production of DAG, phosphatidic acid (PA) and lyso-PA (LPA) that are necessary for membrane fission and generation of specific transport carriers to the cell surface. Under oxidative stress, is phosphorylated at Tyr-463 via SRC-ABL1 and contributes to cell survival by activating IKK complex and subsequent nuclear translocation and activation of NFKB1. Involved in cell migration by regulating integrin alpha-5/beta-3 recycling and promoting its recruitment in newly forming focal adhesion. In osteoblast differentiation, mediates the bone morphogenetic protein 2 (BMP2)-induced nuclear export of HDAC7, which results in the inhibition of HDAC7 transcriptional repression of RUNX2. In neurons, plays an important role in neuronal polarity by regulating the biogenesis of TGN-derived dendritic vesicles, and is involved in the maintenance of dendritic arborization and Golgi structure in hippocampal cells. May potentiate mitogenesis induced by the neuropeptide bombesin or vasopressin by mediating an increase in the duration of MAPK1/3 (ERK1/2) signaling, which leads to accumulation of immediate-early gene products including FOS that stimulate cell cycle progression. Plays an important role in the proliferative response induced by low calcium in keratinocytes, through sustained activation of MAPK1/3 (ERK1/2) pathway. Downstream of novel PKC signaling, plays a role in cardiac hypertrophy by phosphorylating HDAC5, which in turn triggers XPO1/CRM1-dependent nuclear export of HDAC5, MEF2A transcriptional activation and induction of downstream target genes that promote myocyte hypertrophy and pathological cardiac remodeling. Mediates cardiac troponin I (TNNI3) phosphorylation at the PKA sites, which results in reduced myofilament calcium sensitivity, and accelerated crossbridge cycling kinetics. The PRKD1-HDAC5 pathway is also involved in angiogenesis by mediating VEGFA-induced specific subset of gene expression, cell migration, and tube formation. In response to VEGFA, is necessary and required for HDAC7 phosphorylation which induces HDAC7 nuclear export and endothelial cell proliferation and migration. During apoptosis induced by cytarabine and other genotoxic agents, PRKD1 is cleaved by caspase-3 at Asp-378, resulting in activation of its kinase function and increased sensitivity of cells to the cytotoxic effects of genotoxic agents. In epithelial cells, is required for transducing flagellin-stimulated inflammatory responses by binding and phosphorylating TLR5, which contributes to MAPK14/p38 activation and production of inflammatory cytokines. Acts as an activator of NLRP3 inflammasome assembly by mediating phosphorylation of NLRP3. May play a role in inflammatory response by mediating activation of NF-kappa-B. May be involved in pain transmission by directly modulating TRPV1 receptor. Plays a role in activated KRAS-mediated stabilization of ZNF304 in colorectal cancer (CRC) cells. Regulates nuclear translocation of transcription factor TFEB in macrophages upon live S.enterica infection. The sequence is that of Serine/threonine-protein kinase D1 (PRKD1) from Homo sapiens (Human).